Reading from the N-terminus, the 101-residue chain is NADH-quinone oxidoreductase subunit K (101 aa).

Helical transmembrane passes span 4–24 (LAHF…GIFL), 30–50 (IVLL…FVAF), and 61–81 (VFVF…LAIL).

This sequence belongs to the complex I subunit 4L family. As to quaternary structure, NDH-1 is composed of 14 different subunits. Subunits NuoA, H, J, K, L, M, N constitute the membrane sector of the complex.

The protein resides in the cell inner membrane. It carries out the reaction a quinone + NADH + 5 H(+)(in) = a quinol + NAD(+) + 4 H(+)(out). In terms of biological role, NDH-1 shuttles electrons from NADH, via FMN and iron-sulfur (Fe-S) centers, to quinones in the respiratory chain. The immediate electron acceptor for the enzyme in this species is believed to be ubiquinone. Couples the redox reaction to proton translocation (for every two electrons transferred, four hydrogen ions are translocated across the cytoplasmic membrane), and thus conserves the redox energy in a proton gradient. The chain is NADH-quinone oxidoreductase subunit K from Cupriavidus metallidurans (strain ATCC 43123 / DSM 2839 / NBRC 102507 / CH34) (Ralstonia metallidurans).